The sequence spans 266 residues: Energy-coupling factor transporter ATP-binding protein EcfA1 (266 aa).

The ABC transporter domain occupies 2 to 237 (IKLNNVTFRY…EKIIEIAKIA (236 aa)). 37–44 (GHNGSGKS) contacts ATP.

The protein belongs to the ABC transporter superfamily. Energy-coupling factor EcfA family. In terms of assembly, forms a stable energy-coupling factor (ECF) transporter complex composed of 2 membrane-embedded substrate-binding proteins (S component), 2 ATP-binding proteins (A component) and 2 transmembrane proteins (T component).

Its subcellular location is the cell membrane. ATP-binding (A) component of a common energy-coupling factor (ECF) ABC-transporter complex. Unlike classic ABC transporters this ECF transporter provides the energy necessary to transport a number of different substrates. The polypeptide is Energy-coupling factor transporter ATP-binding protein EcfA1 (Mycoplasmopsis synoviae (strain 53) (Mycoplasma synoviae)).